A 300-amino-acid chain; its full sequence is Porphobilinogen deaminase (300 aa).

Cys239 is subject to S-(dipyrrolylmethanemethyl)cysteine.

Belongs to the HMBS family. In terms of assembly, monomer. Dipyrromethane serves as cofactor.

The catalysed reaction is 4 porphobilinogen + H2O = hydroxymethylbilane + 4 NH4(+). The protein operates within porphyrin-containing compound metabolism; protoporphyrin-IX biosynthesis; coproporphyrinogen-III from 5-aminolevulinate: step 2/4. Functionally, tetrapolymerization of the monopyrrole PBG into the hydroxymethylbilane pre-uroporphyrinogen in several discrete steps. This is Porphobilinogen deaminase from Francisella philomiragia subsp. philomiragia (strain ATCC 25017 / CCUG 19701 / FSC 153 / O#319-036).